A 258-amino-acid chain; its full sequence is MTYLAKILDEKRHEVAELRKQRPQQRYEERKNDLSSCRDFAGNLKRTGENLRLIAEIKKASPSRGVIVHDFDPVDMARRYIGLGASAFSVLTDRLFFQGSIDYLETVKLQFHLPVIRKDFIIDERQIFESRLIGADAILLIVAALEASQLRDYLQLAAEIGLAVLVEVHDRQELDTAAEAGAGIIGVNNRNLKDFSVSLDTAIDLRPHFPEGVIAVAESGLKSADDIQRIGQASFDAVLIGEGLHVSPELHNVTWQKP.

The protein belongs to the TrpC family.

It carries out the reaction 1-(2-carboxyphenylamino)-1-deoxy-D-ribulose 5-phosphate + H(+) = (1S,2R)-1-C-(indol-3-yl)glycerol 3-phosphate + CO2 + H2O. Its pathway is amino-acid biosynthesis; L-tryptophan biosynthesis; L-tryptophan from chorismate: step 4/5. In Chlorobium limicola (strain DSM 245 / NBRC 103803 / 6330), this protein is Indole-3-glycerol phosphate synthase.